A 47-amino-acid polypeptide reads, in one-letter code: uncharacterized protein (47 aa).

Residues 22–47 (VGPRTKRANQASPPVGRHSSRLMCPG) are disordered.

This is an uncharacterized protein from Saccharomyces cerevisiae (strain ATCC 204508 / S288c) (Baker's yeast).